The following is a 335-amino-acid chain: Serpentine receptor class alpha-13 (335 aa).

The Extracellular segment spans residues 1 to 25; the sequence is MAIISSVNRTCASESLLELYRSYKY. Residues 26-46 traverse the membrane as a helical segment; that stretch reads ILSTSFNIIIPIISLFFLVYA. Over 47-61 the chain is Cytoplasmic; that stretch reads IKQLCAQSIIQYSTR. A helical membrane pass occupies residues 62 to 82; it reads VLLITTILFAVCHQIAYFCFK. Topologically, residues 83-108 are extracellular; that stretch reads ADLLYTMLFKLDQPCNLQHSSYDCRF. The helical transmembrane segment at 109–129 threads the bilayer; sequence ITIATTTSNCGMALVQLAMSI. The Cytoplasmic segment spans residues 130 to 146; the sequence is DRVFALKFNRVYYKLKS. A helical membrane pass occupies residues 147 to 167; sequence IPGITLALITLSISFSMFFIL. The Extracellular portion of the chain corresponds to 168 to 192; sequence TIDDPLSGYVNHCGFYPTYSQDKFH. The helical transmembrane segment at 193–213 threads the bilayer; that stretch reads IFLDVTLYLAVFNFVFDIGLM. The Cytoplasmic portion of the chain corresponds to 214 to 243; that stretch reads YYSYQEILWKRSYSFVNRFQSRISLKCTQA. A helical membrane pass occupies residues 244-264; the sequence is IFIISICQCISNVLYSGLLSL. Topologically, residues 265-278 are extracellular; it reads LMKLGRYMSSADYN. The chain crosses the membrane as a helical span at residues 279 to 299; that stretch reads LSLSLAYTTPYSCLILPILIC. Over 300–335 the chain is Cytoplasmic; sequence KVLEYIKKQRTVGILSLRNQKQSMEGHMAMINSAWK.

Belongs to the nematode receptor-like protein sra family. Expressed in the AWA and AWC chemosensory neurons.

It is found in the membrane. Its function is as follows. Chemosensory receptor that negatively regulates RAS/MAPK signaling during vulva induction and the negative regulation of olfaction of volitile attractants. Required for the suppression of vulval induction in response to food starvation. Signaling acts through the GPA-5 G-alpha protein subunit. This is Serpentine receptor class alpha-13 (sra-13) from Caenorhabditis elegans.